A 699-amino-acid polypeptide reads, in one-letter code: Polyribonucleotide nucleotidyltransferase (699 aa).

Mg(2+) contacts are provided by Asp-485 and Asp-491. In terms of domain architecture, KH spans 552–611; sequence PRITVIKINPEKIRDVIGKGGAVIRALTEETGTTIELEDDGTVKIASSNGEATKEAIRRI. The region spanning 621-689 is the S1 motif domain; that stretch reads GRIYNGKVIR…RQGRVRLSIK (69 aa).

The protein belongs to the polyribonucleotide nucleotidyltransferase family. Component of the RNA degradosome, which is a multiprotein complex involved in RNA processing and mRNA degradation. Mg(2+) serves as cofactor.

The protein localises to the cytoplasm. It catalyses the reaction RNA(n+1) + phosphate = RNA(n) + a ribonucleoside 5'-diphosphate. In terms of biological role, involved in mRNA degradation. Catalyzes the phosphorolysis of single-stranded polyribonucleotides processively in the 3'- to 5'-direction. This is Polyribonucleotide nucleotidyltransferase from Shewanella baltica (strain OS223).